The primary structure comprises 125 residues: Large ribosomal subunit protein bL12 (125 aa).

The protein belongs to the bacterial ribosomal protein bL12 family. As to quaternary structure, homodimer. Part of the ribosomal stalk of the 50S ribosomal subunit. Forms a multimeric L10(L12)X complex, where L10 forms an elongated spine to which 2 to 4 L12 dimers bind in a sequential fashion. Binds GTP-bound translation factors.

Functionally, forms part of the ribosomal stalk which helps the ribosome interact with GTP-bound translation factors. Is thus essential for accurate translation. In Gluconacetobacter diazotrophicus (strain ATCC 49037 / DSM 5601 / CCUG 37298 / CIP 103539 / LMG 7603 / PAl5), this protein is Large ribosomal subunit protein bL12.